Reading from the N-terminus, the 147-residue chain is Globin (147 aa).

Residues 1 to 147 enclose the Globin domain; that stretch reads GLSAEQKTAL…LLGVLIENHQ (147 aa). Heme b contacts are provided by His66 and His98.

This sequence belongs to the globin family. Homodimer.

This is Globin from Tritia mutabilis (Sea snail).